We begin with the raw amino-acid sequence, 476 residues long: Replication factor C large subunit (476 aa).

50–57 (GPPGVGKT) contributes to the ATP binding site. The tract at residues 447–476 (YEKGTKKGKGEKRRKGSDEGSGLLKWLKKD) is disordered. A compositionally biased stretch (basic residues) spans 452–461 (KKGKGEKRRK).

This sequence belongs to the activator 1 small subunits family. RfcL subfamily. Heteromultimer composed of small subunits (RfcS) and large subunits (RfcL).

Part of the RFC clamp loader complex which loads the PCNA sliding clamp onto DNA. This Ignicoccus hospitalis (strain KIN4/I / DSM 18386 / JCM 14125) protein is Replication factor C large subunit.